We begin with the raw amino-acid sequence, 234 residues long: Large ribosomal subunit protein uL1 (234 aa).

The protein belongs to the universal ribosomal protein uL1 family. In terms of assembly, part of the 50S ribosomal subunit.

In terms of biological role, binds directly to 23S rRNA. The L1 stalk is quite mobile in the ribosome, and is involved in E site tRNA release. Protein L1 is also a translational repressor protein, it controls the translation of the L11 operon by binding to its mRNA. The chain is Large ribosomal subunit protein uL1 from Escherichia coli O127:H6 (strain E2348/69 / EPEC).